The following is a 240-amino-acid chain: Probable xyloglucan-specific endo-beta-1,4-glucanase A (240 aa).

A signal peptide spans 1–15; it reads MKFLTPLVLSSLASA.

The protein belongs to the glycosyl hydrolase 12 (cellulase H) family.

It is found in the secreted. The enzyme catalyses xyloglucan + H2O = xyloglucan oligosaccharides.. Its function is as follows. Catalyzes endohydrolysis of 1,4-beta-D-glucosidic linkages in xyloglucan with retention of the beta-configuration of the glycosyl residues. Specific for xyloglucan and does not hydrolyze other cell wall components. In Aspergillus oryzae (strain ATCC 42149 / RIB 40) (Yellow koji mold), this protein is Probable xyloglucan-specific endo-beta-1,4-glucanase A (xgeA).